The following is a 256-amino-acid chain: MIGKSLLTFSTLNEGILLKRYKRFLADVELDTGHIVTAHCANTGPMTGVLKPGGRVRVRYAPSPSRKLSWSWEQAQVVNQAGNRIWVGVNTALPNKIVRLAIEAGCFREALGEIARIRNEVKYGRTGNSRIDLLLTPGENNCDQRQIFLEIKNTTWTDGSLALFPDTVTERGQKHLQEMIDVLPNARALLVPCISRNDVDLFAPGDAADPIYGNLFRQALSEGVEVMPCCFGFFSDHITWEGMRPFRETQTIFPLP.

It belongs to the SfsA family.

The sequence is that of Sugar fermentation stimulation protein homolog from Prochlorococcus marinus (strain MIT 9211).